The primary structure comprises 445 residues: Probable glycine dehydrogenase (decarboxylating) subunit 1 (445 aa).

It belongs to the GcvP family. N-terminal subunit subfamily. The glycine cleavage system is composed of four proteins: P, T, L and H. In this organism, the P 'protein' is a heterodimer of two subunits.

The enzyme catalyses N(6)-[(R)-lipoyl]-L-lysyl-[glycine-cleavage complex H protein] + glycine + H(+) = N(6)-[(R)-S(8)-aminomethyldihydrolipoyl]-L-lysyl-[glycine-cleavage complex H protein] + CO2. In terms of biological role, the glycine cleavage system catalyzes the degradation of glycine. The P protein binds the alpha-amino group of glycine through its pyridoxal phosphate cofactor; CO(2) is released and the remaining methylamine moiety is then transferred to the lipoamide cofactor of the H protein. The protein is Probable glycine dehydrogenase (decarboxylating) subunit 1 of Anaeromyxobacter dehalogenans (strain 2CP-1 / ATCC BAA-258).